We begin with the raw amino-acid sequence, 1449 residues long: ABC transporter G family member 21 (1449 aa).

The span at 1-10 (MEEYELREIA) shows a compositional bias: basic and acidic residues. The interval 1–49 (MEEYELREIALQEGGSNLDINTPPNYDNPVGDGSSPPDSPDIQKSENQF) is disordered. Polar residues predominate over residues 14-25 (GGSNLDINTPPN). The 254-residue stretch at 130–383 (ISFFNLFKPS…FIDLGFDCEP (254 aa)) folds into the ABC transporter 1 domain. Positions 488-731 (WGDKFSLISR…ILSVEGKDYL (244 aa)) constitute an ABC transmembrane type-2 1 domain. 5 helical membrane-spanning segments follow: residues 519–539 (IPGLFTRGGAIFSAILFNAFL), 577–597 (IPLTMIQVFLFSIVVYFMFGL), 602–622 (GKFFIFCFTLVGATLATTNLF), 634–654 (ISQNVMNVILIFMITYCGYTI), and 747–767 (FITYLWWVLFTAMNMFAMEYF). One can recognise an ABC transporter 2 domain in the interval 818 to 1062 (FTWQNINYTV…LTSYFERYGV (245 aa)). 854-861 (GSSGAGKT) lines the ATP pocket. The ABC transmembrane type-2 2 domain maps to 1152-1386 (FYTYGSFIQS…PISEPLTGYV (235 aa)). The next 6 helical transmembrane spans lie at 1155 to 1175 (YGSFIQSALAGLIIGFTFWSL), 1188 to 1208 (FIFEALILGILLIFVVLPQFI), 1228 to 1248 (FAISIVVVELPFITVSGTIFF), 1266 to 1286 (FYFWFIFILFLYFCVSFGQAV), 1296 to 1316 (AHTLIPLLIVFLFLFCGVMVI), and 1423 to 1443 (LALIICFWIFNTLMVITFVYI).

This sequence belongs to the ABC transporter superfamily. ABCG family. PDR (TC 3.A.1.205) subfamily.

The protein localises to the membrane. In Dictyostelium discoideum (Social amoeba), this protein is ABC transporter G family member 21 (abcG21).